Reading from the N-terminus, the 547-residue chain is Sodium-coupled neutral amino acid transporter 4 (547 aa).

Residues 1-104 (MDPIELRSVN…GLSYAMANTG (104 aa)) are Extracellular-facing. Position 49 is a phosphoserine (serine 49). A helical transmembrane segment spans residues 105-125 (IVLFVIMLLTVAILSLYSVHL). Residues 126–151 (LLKTAKEGGSLIYEKLGEKAFGWPGK) are Cytoplasmic-facing. Residues 152-172 (IGAFISITMQNIGAMSSYLFI) form a helical membrane-spanning segment. Topologically, residues 173–195 (IKYELPEVIRVFMGLEENTGEWY) are extracellular. A helical membrane pass occupies residues 196–216 (LNGNYLVLFVSVGIILPLSLL). At 217-220 (KNLG) the chain is on the cytoplasmic side. A helical transmembrane segment spans residues 221-241 (YLGYTSGFSLTCMVFFVSVVI). The Extracellular portion of the chain corresponds to 242-332 (YKKFQIPCPL…PKYFVFNSRT (91 aa)). Cysteine 249 and cysteine 321 are disulfide-bonded. Asparagine 260, asparagine 264, and asparagine 276 each carry an N-linked (GlcNAc...) asparagine glycan. The helical transmembrane segment at 333-353 (AYAIPILAFAFVCHPEVLPIY) threads the bilayer. Residues 354 to 369 (SELKDRSRRKMQTVSN) are Cytoplasmic-facing. Residues 370 to 390 (ISITGMLVMYLLAALFGYLSF) form a helical membrane-spanning segment. The Extracellular portion of the chain corresponds to 391–411 (YGEVEDELLHAYSKVYTFDTA). Residues 412 to 432 (LLMVRLAVLVAVTLTVPIVLF) traverse the membrane as a helical segment. Over 433 to 453 (PIRTSVITLLFPRRPFSWVKH) the chain is Cytoplasmic. The chain crosses the membrane as a helical span at residues 454-474 (FGIAAIIIALNNVLVILVPTI). Topologically, residues 475–476 (KY) are extracellular. Residues 477–497 (IFGFIGASSATMLIFILPAAF) form a helical membrane-spanning segment. The Cytoplasmic segment spans residues 498 to 514 (YLKLVKKEPLRSPQKIG). The helical transmembrane segment at 515–535 (ALVFLVTGIIFMMGSMALIII) threads the bilayer. Residues 536–547 (DWIYNPPNPDHH) lie on the Extracellular side of the membrane.

The protein belongs to the amino acid/polyamine transporter 2 family. The disulfide bond plays an important role in substrate transport, but has no effect on trafficking to the cell surface. As to expression, expressed predominantly in liver, and at lower level in skeletal muscle.

It is found in the cell membrane. Its subcellular location is the cell projection. The protein localises to the microvillus membrane. It catalyses the reaction L-alanine(in) + Na(+)(in) = L-alanine(out) + Na(+)(out). It carries out the reaction L-serine(in) + Na(+)(in) = L-serine(out) + Na(+)(out). The enzyme catalyses glycine(in) + Na(+)(in) = glycine(out) + Na(+)(out). The catalysed reaction is L-cysteine(in) + Na(+)(in) = L-cysteine(out) + Na(+)(out). It catalyses the reaction L-asparagine(in) + Na(+)(in) = L-asparagine(out) + Na(+)(out). It carries out the reaction L-threonine(in) + Na(+)(in) = L-threonine(out) + Na(+)(out). The enzyme catalyses L-proline(in) + Na(+)(in) = L-proline(out) + Na(+)(out). The catalysed reaction is L-methionine(in) + Na(+)(in) = L-methionine(out) + Na(+)(out). It catalyses the reaction L-glutamine(in) + Na(+)(in) = L-glutamine(out) + Na(+)(out). It carries out the reaction L-histidine(in) + Na(+)(in) = L-histidine(out) + Na(+)(out). Functionally, symporter that cotransports neutral amino acids and sodium ions from the extraccellular to the intracellular side of the cell membrane. The transport is electrogenic, pH dependent and partially tolerates substitution of Na(+) by Li(+). Preferentially transports smaller amino acids, such as glycine, L-alanine, L-serine, L-asparagine and L-threonine, followed by L-cysteine, L-histidine, L-proline and L-glutamine and L-methionine. This Rattus norvegicus (Rat) protein is Sodium-coupled neutral amino acid transporter 4.